Consider the following 66-residue polypeptide: Toxin BomPI (66 aa).

The LCN-type CS-alpha/beta domain occupies 2–64; sequence RDAYIAQPEN…VPIRIEGKCH (63 aa). Cystine bridges form between cysteine 12–cysteine 63, cysteine 16–cysteine 36, cysteine 22–cysteine 46, and cysteine 26–cysteine 48.

It belongs to the long (4 C-C) scorpion toxin superfamily. Sodium channel inhibitor family. Alpha subfamily. In terms of tissue distribution, expressed by the venom gland.

Its subcellular location is the secreted. Functionally, alpha toxins bind voltage-independently at site-3 of sodium channels (Nav) and inhibit the inactivation of the activated channels, thereby blocking neuronal transmission. This chain is Toxin BomPI, found in Buthus occitanus mardochei (Moroccan scorpion).